The sequence spans 259 residues: DNA-directed RNA polymerase 30 kDa polypeptide (259 aa).

The TFIIS-type zinc-finger motif lies at 155-195 (YNTPCPNCKSRNTTPMMIQTRAADEPPLVRHACRDCKQHFK). Positions 159, 162, 187, and 190 each coordinate Zn(2+). The tract at residues 214–259 (ENKEITEILPDNNPSPPESPEPASPIDDGLIRSTFDRNDEPPEDDE) is disordered. The span at 226–236 (NPSPPESPEPA) shows a compositional bias: pro residues.

This sequence belongs to the poxviridae DNA-directed RNA polymerase 30 kDa subunit family. In terms of assembly, the DNA-dependent RNA polymerase (vRNAP) consists of eight subunits encoded by early viral genes and termed according to their apparent molecular masses Rpo147, Rpo132, Rpo35, Rpo30, Rpo22, Rpo19, Rpo18, and Rpo7. The same holoenzyme, with the addition of the transcription-specificity factor RAP94, is used for early gene expression.

It is found in the virion. Its subcellular location is the host cytoplasm. It catalyses the reaction RNA(n) + a ribonucleoside 5'-triphosphate = RNA(n+1) + diphosphate. Its function is as follows. Part of the DNA-dependent RNA polymerase which catalyzes the transcription of viral DNA into RNA using the four ribonucleoside triphosphates as substrates. Responsible for the transcription of early, intermediate and late genes. DNA-dependent RNA polymerase associates with the early transcription factor (ETF), itself composed of OPG118/D6 and OPG134/A8, thereby allowing the early genes transcription. Late transcription, and probably also intermediate transcription, require newly synthesized RNA polymerase. In Homo sapiens (Human), this protein is DNA-directed RNA polymerase 30 kDa polypeptide (OPG066).